Here is a 494-residue protein sequence, read N- to C-terminus: Glycerol kinase (494 aa).

T12 is an ADP binding site. ATP contacts are provided by T12, T13, and S14. T12 provides a ligand contact to sn-glycerol 3-phosphate. R16 lines the ADP pocket. Sn-glycerol 3-phosphate is bound by residues R82, E83, Y134, and D241. Glycerol-binding residues include R82, E83, Y134, D241, and Q242. Residues T263 and G306 each contribute to the ADP site. Residues T263, G306, Q310, and G407 each contribute to the ATP site. Position 407 (G407) interacts with ADP.

The protein belongs to the FGGY kinase family.

It carries out the reaction glycerol + ATP = sn-glycerol 3-phosphate + ADP + H(+). Its pathway is polyol metabolism; glycerol degradation via glycerol kinase pathway; sn-glycerol 3-phosphate from glycerol: step 1/1. Inhibited by fructose 1,6-bisphosphate (FBP). Its function is as follows. Key enzyme in the regulation of glycerol uptake and metabolism. Catalyzes the phosphorylation of glycerol to yield sn-glycerol 3-phosphate. The polypeptide is Glycerol kinase (Brachyspira hyodysenteriae (strain ATCC 49526 / WA1)).